A 699-amino-acid chain; its full sequence is Polyribonucleotide nucleotidyltransferase (699 aa).

Residues Asp-485 and Asp-491 each contribute to the Mg(2+) site. Residues 552–611 (PRITTIKINPEKIRDVIGKGGAVIRALTEETGTTIELEDDGTVKIASNNGDATREAIRRI) form the KH domain. One can recognise an S1 motif domain in the interval 621–689 (GRLYTGKVIR…RQGRVRLSIK (69 aa)).

This sequence belongs to the polyribonucleotide nucleotidyltransferase family. Component of the RNA degradosome, which is a multiprotein complex involved in RNA processing and mRNA degradation. The cofactor is Mg(2+).

It is found in the cytoplasm. It catalyses the reaction RNA(n+1) + phosphate = RNA(n) + a ribonucleoside 5'-diphosphate. Its function is as follows. Involved in mRNA degradation. Catalyzes the phosphorolysis of single-stranded polyribonucleotides processively in the 3'- to 5'-direction. In Shewanella amazonensis (strain ATCC BAA-1098 / SB2B), this protein is Polyribonucleotide nucleotidyltransferase.